The sequence spans 298 residues: N-acetylmuramic acid 6-phosphate etherase (298 aa).

The SIS domain occupies I55–K218. E83 serves as the catalytic Proton donor. E114 is an active-site residue.

This sequence belongs to the GCKR-like family. MurNAc-6-P etherase subfamily. As to quaternary structure, homodimer.

The enzyme catalyses N-acetyl-D-muramate 6-phosphate + H2O = N-acetyl-D-glucosamine 6-phosphate + (R)-lactate. Its pathway is amino-sugar metabolism; 1,6-anhydro-N-acetylmuramate degradation. It participates in amino-sugar metabolism; N-acetylmuramate degradation. The protein operates within cell wall biogenesis; peptidoglycan recycling. Its function is as follows. Specifically catalyzes the cleavage of the D-lactyl ether substituent of MurNAc 6-phosphate, producing GlcNAc 6-phosphate and D-lactate. Together with AnmK, is also required for the utilization of anhydro-N-acetylmuramic acid (anhMurNAc) either imported from the medium or derived from its own cell wall murein, and thus plays a role in cell wall recycling. This Escherichia coli O8 (strain IAI1) protein is N-acetylmuramic acid 6-phosphate etherase.